The sequence spans 388 residues: Succinate--CoA ligase [ADP-forming] subunit beta (388 aa).

The ATP-grasp domain occupies 9–244 (KSLFAEYGLP…PSQDDAREAH (236 aa)). ATP contacts are provided by residues Lys46, 53 to 55 (GRG), Glu99, Thr102, and Glu107. Positions 199 and 213 each coordinate Mg(2+). Substrate-binding positions include Asn264 and 321–323 (GIV).

It belongs to the succinate/malate CoA ligase beta subunit family. As to quaternary structure, heterotetramer of two alpha and two beta subunits. Mg(2+) serves as cofactor.

It carries out the reaction succinate + ATP + CoA = succinyl-CoA + ADP + phosphate. The enzyme catalyses GTP + succinate + CoA = succinyl-CoA + GDP + phosphate. The protein operates within carbohydrate metabolism; tricarboxylic acid cycle; succinate from succinyl-CoA (ligase route): step 1/1. In terms of biological role, succinyl-CoA synthetase functions in the citric acid cycle (TCA), coupling the hydrolysis of succinyl-CoA to the synthesis of either ATP or GTP and thus represents the only step of substrate-level phosphorylation in the TCA. The beta subunit provides nucleotide specificity of the enzyme and binds the substrate succinate, while the binding sites for coenzyme A and phosphate are found in the alpha subunit. The chain is Succinate--CoA ligase [ADP-forming] subunit beta from Shewanella putrefaciens (strain CN-32 / ATCC BAA-453).